A 355-amino-acid chain; its full sequence is Histidinol-phosphate aminotransferase (355 aa).

N6-(pyridoxal phosphate)lysine is present on lysine 222.

This sequence belongs to the class-II pyridoxal-phosphate-dependent aminotransferase family. Histidinol-phosphate aminotransferase subfamily. Requires pyridoxal 5'-phosphate as cofactor.

It catalyses the reaction L-histidinol phosphate + 2-oxoglutarate = 3-(imidazol-4-yl)-2-oxopropyl phosphate + L-glutamate. It participates in amino-acid biosynthesis; L-histidine biosynthesis; L-histidine from 5-phospho-alpha-D-ribose 1-diphosphate: step 7/9. In Natronomonas pharaonis (strain ATCC 35678 / DSM 2160 / CIP 103997 / JCM 8858 / NBRC 14720 / NCIMB 2260 / Gabara) (Halobacterium pharaonis), this protein is Histidinol-phosphate aminotransferase.